We begin with the raw amino-acid sequence, 201 residues long: Proteinase inhibitor type-2 CEVI57 (201 aa).

A signal peptide spans 1 to 23 (MAVYKVSFLAHLLVLGMYLLVST). 3 repeat units span residues 27 to 83 (ANAC…DPKN), 84 to 143 (PNIC…IEPK), and 144 to 199 (GCTK…QSIS). 8 disulfides stabilise this stretch: Cys30/Cys118, Cys34/Cys114, Cys42/Cys124, Cys54/Cys91, Cys57/Cys75, Cys58/Cys87, Cys64/Cys100, and Cys117/Cys135.

It belongs to the protease inhibitor I20 (potato type II proteinase inhibitor) family.

This Solanum lycopersicum (Tomato) protein is Proteinase inhibitor type-2 CEVI57 (CEVI57).